A 476-amino-acid chain; its full sequence is Ribulose bisphosphate carboxylase large chain (476 aa).

A propeptide spanning residues 1-2 is cleaved from the precursor; it reads MS. Residue proline 3 is modified to N-acetylproline. N6,N6,N6-trimethyllysine is present on lysine 14. The substrate site is built by asparagine 123 and threonine 173. Residue lysine 175 is the Proton acceptor of the active site. Residue lysine 177 coordinates substrate. Mg(2+) contacts are provided by lysine 201, aspartate 203, and glutamate 204. The residue at position 201 (lysine 201) is an N6-carboxylysine. Residue histidine 294 is the Proton acceptor of the active site. Arginine 295, histidine 327, and serine 379 together coordinate substrate.

The protein belongs to the RuBisCO large chain family. Type I subfamily. In terms of assembly, heterohexadecamer of 8 large chains and 8 small chains; disulfide-linked. The disulfide link is formed within the large subunit homodimers. It depends on Mg(2+) as a cofactor. Post-translationally, the disulfide bond which can form in the large chain dimeric partners within the hexadecamer appears to be associated with oxidative stress and protein turnover.

The protein resides in the plastid. It localises to the chloroplast. The catalysed reaction is 2 (2R)-3-phosphoglycerate + 2 H(+) = D-ribulose 1,5-bisphosphate + CO2 + H2O. The enzyme catalyses D-ribulose 1,5-bisphosphate + O2 = 2-phosphoglycolate + (2R)-3-phosphoglycerate + 2 H(+). Functionally, ruBisCO catalyzes two reactions: the carboxylation of D-ribulose 1,5-bisphosphate, the primary event in carbon dioxide fixation, as well as the oxidative fragmentation of the pentose substrate in the photorespiration process. Both reactions occur simultaneously and in competition at the same active site. The protein is Ribulose bisphosphate carboxylase large chain of Setaria italica (Foxtail millet).